The sequence spans 734 residues: MQSHIGQWTSTAKGHLSRDENGDEKTDYSRWRLVDRQGRQTWRYLESDEENEKSPQTVPEKYFLGLDTGLPDLPKAETPLQAAQDGVSFLSQLQLSSGQWASECTGPMFILPCVIIAWYVTNTPIPPAYAIEIRRYLFARQRVEDGGWGWHVEARSSAIGTALNYVVLRLLGASKDDHRLIQARKLLHSYGGATYAPGIAKFWLCVLGVMKWECVNPFLPEFWLLPDSDPTAPSKWYIHTRTNFTSLSYIWSKQWSFAGDEVTKQLQTELYPEPYSAIDFAAHRTSLAEVDNNYPKWWLVNLMNWLTVAVYIPYMRKKATVESAEQRVWELIQAEDKNSEFIGLSPISKAANMIACYIHDGKDSESVRSHGETIFQYFWMNGEGMACNLSDGIQVWDTSLAVQAIAAAGGAGNPRFQSTVIKAHEFLEDHQLLDDVQDQEMCCRGHRKGGWPFSTKYQGYMISECTGEGLRSILQLQKTFQLDLKKRIPADRLHNAVDCLLNLQNDTGGFGVYEKRQGSLKLAWLEMGEFSGKTMVTYDYVECTTAVVSALASFSEFYPDYRKEEVQTARTRGLEFIKSSQKPYGGWHGAWGVCFTYAGMFALESLALAGETYSNSEPSRKGCTFLVSKQRDDGGWGESYLSFQKEEYIEHEDAQVVQTAWACLGLMHAEYPDKTPVKRGLKLIMSRQQSKGHWLQEQYEGGVGDGVISYSNYKLYWPVRALAEYVRRFGNEEM.

Residues 1–12 (MQSHIGQWTSTA) show a composition bias toward polar residues. The tract at residues 1-26 (MQSHIGQWTSTAKGHLSRDENGDEKT) is disordered. Positions 16-26 (LSRDENGDEKT) are enriched in basic and acidic residues. PFTB repeat units follow at residues 130–172 (AIEI…RLLG), 493–534 (LHNA…SGKT), 570–610 (RTRG…ALAG), and 619–668 (SRKG…GLMH).

It belongs to the terpene cyclase/mutase family.

It functions in the pathway secondary metabolite biosynthesis; terpenoid biosynthesis. In terms of biological role, terpene cyclase/mutase; part of the gene cluster that mediates the biosynthesis of the meroterpenoids nectripenoids A and B, as well as cochliquninone D and isocochliquninone E. The pathway probably begins with the HR-PKS ntnH that catalyzes two chain-extension steps to form a reduced triketide, which then primes the SAT domain in the NR-PKS ntnG to initiate three more cycles of extension to give a linear hexaketide corresponding to the polyketide part of nectripenoids. The FAD-dependent monooxygenase ntnJ then performs an oxidative decarboxylation at C11 of the ntnH/ntnG product, via an electrophilic aromatic hydroxylation with concomitant ipso-decarboxylation. The membrane-bound polyprenyl transferase ntnF then introduces a farnesyl group before the FAD-dependent monooxygenase ntnK functions as the first epoxidase on terminal C12'-C13' olefin, followed by a second epoxidation on C7'-C8' catalyzed by ntnA. The terpene cyclase/mutase ntnI then initiates the sequential tricyclic ring formation through protonation of the terminal epoxide and catalyzes the regioselective and stereoselective 6/6/6-tricyclic ring formation. The cytochrome P450 monooxygenase ntnM may then hydroxylate C1'. The chain is Terpene cyclase/mutase ntnI from Nectria sp.